The chain runs to 367 residues: Adenine deaminase (367 aa).

Residues H19, H21, and H209 each contribute to the Zn(2+) site. E212 acts as the Proton donor in catalysis. D290 provides a ligand contact to Zn(2+). D291 is a substrate binding site.

It belongs to the metallo-dependent hydrolases superfamily. Adenosine and AMP deaminases family. Adenine deaminase type 2 subfamily. It depends on Zn(2+) as a cofactor.

Its subcellular location is the cytoplasm. It is found in the nucleus. The enzyme catalyses adenine + H2O + H(+) = hypoxanthine + NH4(+). Catalyzes the hydrolytic deamination of adenine to hypoxanthine. Plays an important role in the purine salvage pathway and in nitrogen catabolism. Also exhibits a low activity towards N(6)-substituted adenines that are commonly known as the plant hormones cytokinins. The chain is Adenine deaminase from Schizosaccharomyces pombe (strain 972 / ATCC 24843) (Fission yeast).